The sequence spans 396 residues: Elongation factor Tu (396 aa).

The 197-residue stretch at 10-206 (KPHVNVGTIG…ALDSYIPTPE (197 aa)) folds into the tr-type G domain. The G1 stretch occupies residues 19 to 26 (GHVDHGKT). Residue 19-26 (GHVDHGKT) participates in GTP binding. A Mg(2+)-binding site is contributed by threonine 26. A G2 region spans residues 60 to 64 (GITIN). The G3 stretch occupies residues 81–84 (DCPG). Residues 81-85 (DCPGH) and 136-139 (NKCD) contribute to the GTP site. Residues 136–139 (NKCD) form a G4 region. The G5 stretch occupies residues 174–176 (SAK).

Belongs to the TRAFAC class translation factor GTPase superfamily. Classic translation factor GTPase family. EF-Tu/EF-1A subfamily. As to quaternary structure, monomer.

Its subcellular location is the cytoplasm. The catalysed reaction is GTP + H2O = GDP + phosphate + H(+). Its function is as follows. GTP hydrolase that promotes the GTP-dependent binding of aminoacyl-tRNA to the A-site of ribosomes during protein biosynthesis. The chain is Elongation factor Tu from Herminiimonas arsenicoxydans.